Reading from the N-terminus, the 310-residue chain is NAD-dependent protein deacylase sirtuin-5, mitochondrial (310 aa).

A mitochondrion-targeting transit peptide spans 1-36; that stretch reads MQPLQIAPCRLLYGLYRGLKSPASTGTRICPAMARP. The 271-residue stretch at 37–307 folds into the Deacetylase sirtuin-type domain; the sequence is SSNMADFRKL…PEALAPHETG (271 aa). 58–77 provides a ligand contact to NAD(+); that stretch reads GAGVSAESGVPTFRGAGGYW. Substrate is bound by residues Y102 and R105. 140–143 lines the NAD(+) pocket; the sequence is QNID. The Proton acceptor role is filled by H158. The Zn(2+) site is built by C166, C169, C207, and C212. Residues 249 to 251, 275 to 277, and C293 each bind NAD(+); these read GTS and NME.

Belongs to the sirtuin family. Class III subfamily. In terms of assembly, monomer. Homodimer. Interacts with CPS1. Interacts with PCCA. The cofactor is Zn(2+).

Its subcellular location is the mitochondrion. The protein resides in the cytoplasm. The protein localises to the cytosol. It is found in the nucleus. It carries out the reaction N(6)-malonyl-L-lysyl-[protein] + NAD(+) + H2O = 2''-O-malonyl-ADP-D-ribose + nicotinamide + L-lysyl-[protein]. The catalysed reaction is N(6)-succinyl-L-lysyl-[protein] + NAD(+) + H2O = 2''-O-succinyl-ADP-D-ribose + nicotinamide + L-lysyl-[protein]. The enzyme catalyses N(6)-glutaryl-L-lysyl-[protein] + NAD(+) + H2O = 2''-O-glutaryl-ADP-D-ribose + nicotinamide + L-lysyl-[protein]. In terms of biological role, NAD-dependent lysine demalonylase, desuccinylase and deglutarylase that specifically removes malonyl, succinyl and glutaryl groups on target proteins. Activates CPS1 and contributes to the regulation of blood ammonia levels during prolonged fasting: acts by mediating desuccinylation and deglutarylation of CPS1, thereby increasing CPS1 activity in response to elevated NAD levels during fasting. Activates SOD1 by mediating its desuccinylation, leading to reduced reactive oxygen species. Activates SHMT2 by mediating its desuccinylation. Modulates ketogenesis through the desuccinylation and activation of HMGCS2. Has weak NAD-dependent protein deacetylase activity; however this activity may not be physiologically relevant in vivo. Can deacetylate cytochrome c (CYCS) and a number of other proteins in vitro such as UOX. The protein is NAD-dependent protein deacylase sirtuin-5, mitochondrial of Canis lupus familiaris (Dog).